We begin with the raw amino-acid sequence, 263 residues long: tRNA (guanine-N(7)-)-methyltransferase (263 aa).

Polar residues predominate over residues 1 to 10 (MLPQDPSTEP). The tract at residues 1–38 (MLPQDPSTEPTPADDAAPVDSAGQASAPSPADPEGVAH) is disordered. 4 residues coordinate S-adenosyl-L-methionine: Glu91, Glu116, Asp143, and Asp166. Residue Asp166 is part of the active site. Substrate is bound at residue Lys170. Positions 172 to 177 (RHNKRR) are interaction with RNA. Residues Asp202 and 240-243 (TKFE) each bind substrate.

This sequence belongs to the class I-like SAM-binding methyltransferase superfamily. TrmB family.

The enzyme catalyses guanosine(46) in tRNA + S-adenosyl-L-methionine = N(7)-methylguanosine(46) in tRNA + S-adenosyl-L-homocysteine. The protein operates within tRNA modification; N(7)-methylguanine-tRNA biosynthesis. Its function is as follows. Catalyzes the formation of N(7)-methylguanine at position 46 (m7G46) in tRNA. The chain is tRNA (guanine-N(7)-)-methyltransferase from Cupriavidus necator (strain ATCC 17699 / DSM 428 / KCTC 22496 / NCIMB 10442 / H16 / Stanier 337) (Ralstonia eutropha).